The chain runs to 129 residues: ATP synthase epsilon chain (129 aa).

This sequence belongs to the ATPase epsilon chain family. In terms of assembly, F-type ATPases have 2 components, CF(1) - the catalytic core - and CF(0) - the membrane proton channel. CF(1) has five subunits: alpha(3), beta(3), gamma(1), delta(1), epsilon(1). CF(0) has three main subunits: a, b and c.

The protein resides in the cell inner membrane. Functionally, produces ATP from ADP in the presence of a proton gradient across the membrane. The sequence is that of ATP synthase epsilon chain from Campylobacter jejuni subsp. jejuni serotype O:2 (strain ATCC 700819 / NCTC 11168).